A 384-amino-acid chain; its full sequence is 8-amino-7-oxononanoate synthase (384 aa).

Arg-21 serves as a coordination point for substrate. Position 108-109 (108-109 (GF)) interacts with pyridoxal 5'-phosphate. His-133 provides a ligand contact to substrate. Positions 179, 207, and 233 each coordinate pyridoxal 5'-phosphate. Position 236 is an N6-(pyridoxal phosphate)lysine (Lys-236). Thr-352 provides a ligand contact to substrate.

Belongs to the class-II pyridoxal-phosphate-dependent aminotransferase family. BioF subfamily. As to quaternary structure, homodimer. Pyridoxal 5'-phosphate is required as a cofactor.

It catalyses the reaction 6-carboxyhexanoyl-[ACP] + L-alanine + H(+) = (8S)-8-amino-7-oxononanoate + holo-[ACP] + CO2. It participates in cofactor biosynthesis; biotin biosynthesis. Catalyzes the decarboxylative condensation of pimeloyl-[acyl-carrier protein] and L-alanine to produce 8-amino-7-oxononanoate (AON), [acyl-carrier protein], and carbon dioxide. This Escherichia coli O6:K15:H31 (strain 536 / UPEC) protein is 8-amino-7-oxononanoate synthase.